Consider the following 233-residue polypeptide: Bcl-2-like protein 1 (233 aa).

Residues 4 to 24 carry the BH4 motif; it reads SNRELVVDFLSYKLSQKGYSW. The interval 29–71 is disordered; that stretch reads DVEENRTEAPEGTESEAETPSAINGNPSWHLADSPAVNGATGH. Serine 49 bears the Phosphoserine; by PLK3 mark. At serine 62 the chain carries Phosphoserine; by CDK1. The short motif at 86–100 is the BH3 element; sequence VKQALREAGDEFELR. Positions 129 to 148 match the BH1 motif; that stretch reads ELFRDGVNWGRIVAFFSFGG. The BH2 signature appears at 180–195; that stretch reads PWIQENGGWDTFVELY. The helical transmembrane segment at 210 to 226 threads the bilayer; that stretch reads FNRWFLTGMTLAGVVLL.

It belongs to the Bcl-2 family. In terms of assembly, homodimer. Heterodimers with BAX, BAK or BCL2. Heterodimerization with BAX does not seem to be required for anti-apoptotic activity. Interacts with BCL2L11. Interacts with BAD. Interacts with SIVA1 isoform 1; the interaction inhibits the anti-apoptotic activity. Interacts with BECN1 and PGAM5. Interacts with IKZF3. Interacts with HEBP2. Interacts with BOP. Interacts with p53/TP53 and BBC3; interaction with BBC3 disrupts the interaction with p53/TP53. Interacts with DNM1L and CLTA; DNM1L and BCL2L1 may form a complex in synaptic vesicles that also contains clathrin and MFF. Interacts with ATP5F1A and ATP5F1B; the interactions mediate the association of BCL2L1 with the mitochondrial membrane ATP synthase F(1)F(0) ATP synthase. Interacts with VDAC1. Interacts (via the loop between motifs BH4 and BH3) with NLRP1 (via LRR repeats), but not with NLRP2, NLRP3, NLRP4, PYCARD, nor MEFV. Interacts with BCL2L11 (via BH3). Interacts with RNF183. Interacts with GIMAP3/IAN4. Interacts with GIMAP5 and HSPA8/HSC70; the interaction between HSPA8 and BCL2L1 is impaired in the absence of GIMAP5. Interacts with CLU (isoform 4); this interaction releases and activates BAX and promotes cell death. In terms of processing, proteolytically cleaved by caspases during apoptosis. The cleaved protein, lacking the BH4 motif, has pro-apoptotic activity. Post-translationally, phosphorylated on Ser-62 by CDK1. This phosphorylation is partial in normal mitotic cells, but complete in G2-arrested cells upon DNA-damage, thus promoting subsequent apoptosis probably by triggering caspases-mediated proteolysis. Phosphorylated by PLK3, leading to regulate the G2 checkpoint and progression to cytokinesis during mitosis. Phosphorylation at Ser-49 appears during the S phase and G2, disappears rapidly in early mitosis during prometaphase, metaphase and early anaphase, and re-appears during telophase and cytokinesis. Ubiquitinated by RNF183 during prolonged ER stress, leading to degradation by the proteosome.

The protein localises to the mitochondrion membrane. The protein resides in the nucleus membrane. It is found in the mitochondrion matrix. Its subcellular location is the cytoplasm. It localises to the cytoskeleton. The protein localises to the microtubule organizing center. The protein resides in the centrosome. It is found in the cytosol. Its subcellular location is the cytoplasmic vesicle. It localises to the secretory vesicle. The protein localises to the synaptic vesicle membrane. Its function is as follows. Potent inhibitor of cell death. Inhibits activation of caspases. Appears to regulate cell death by blocking the voltage-dependent anion channel (VDAC) by binding to it and preventing the release of the caspase activator, CYC1, from the mitochondrial membrane. Also acts as a regulator of G2 checkpoint and progression to cytokinesis during mitosis. Regulates presynaptic plasticity, including neurotransmitter release and recovery, number of axonal mitochondria as well as size and number of synaptic vesicle clusters. During synaptic stimulation, increases ATP availability from mitochondria through regulation of mitochondrial membrane ATP synthase F(1)F(0) activity and regulates endocytic vesicle retrieval in hippocampal neurons through association with DMN1L and stimulation of its GTPase activity in synaptic vesicles. May attenuate inflammation impairing NLRP1-inflammasome activation, hence CASP1 activation and IL1B release. The chain is Bcl-2-like protein 1 (BCL2L1) from Sus scrofa (Pig).